Here is a 60-residue protein sequence, read N- to C-terminus: Ixodegrin YY-39 (60 aa).

The first 21 residues, 1-21 (MNAALIAALLILGALTLDATA), serve as a signal peptide directing secretion. Residues 49 to 51 (RGD) carry the Cell attachment site motif.

It belongs to the ixodegrin family. Post-translationally, contains 3 disulfide bonds. Expressed in salivary glands.

It is found in the secreted. Tick salivary platelet aggregation inhibitor that plays an important part in the anti-hemostatic strategy of ticks. Inhibits platelet aggregation induced by ADP, thrombin and thromboxane A2 (TXA2). Blocks platelet adhesion to soluble collagen (most probably through the binding to alpha-2/beta-1 integrin (ITGA2/ITGB1)) and binds to purified glycoprotein IIb/IIIa (ITGA2B/ITGB3) in a dose-dependent manner. In vivo, reduces thrombus weight effectively in a rat arteriovenous shunt model and inhibits thrombosis in a carrageenan-induced mouse tail thrombosis model. In Ixodes scapularis (Black-legged tick), this protein is Ixodegrin YY-39.